The primary structure comprises 137 residues: NADH-quinone oxidoreductase subunit A (137 aa).

Helical transmembrane passes span 12 to 32, 66 to 86, and 96 to 116; these read WGFAIFLLGVVGLCAFMLGVS, FYLVAMLFVIFDIEALFLFAW, and TGFVEALVFIAILLAGLVYLF.

Belongs to the complex I subunit 3 family. NDH-1 is composed of 13 different subunits. Subunits NuoA, H, J, K, L, M, N constitute the membrane sector of the complex.

The protein localises to the cell inner membrane. The catalysed reaction is a quinone + NADH + 5 H(+)(in) = a quinol + NAD(+) + 4 H(+)(out). Functionally, NDH-1 shuttles electrons from NADH, via FMN and iron-sulfur (Fe-S) centers, to quinones in the respiratory chain. The immediate electron acceptor for the enzyme in this species is believed to be ubiquinone. Couples the redox reaction to proton translocation (for every two electrons transferred, four hydrogen ions are translocated across the cytoplasmic membrane), and thus conserves the redox energy in a proton gradient. The protein is NADH-quinone oxidoreductase subunit A of Pseudomonas fluorescens (strain Pf0-1).